A 374-amino-acid chain; its full sequence is Probable ethanolamine kinase (374 aa).

R93 and D252 together coordinate ATP.

It belongs to the choline/ethanolamine kinase family.

The enzyme catalyses ethanolamine + ATP = phosphoethanolamine + ADP + H(+). It participates in phospholipid metabolism; phosphatidylethanolamine biosynthesis; phosphatidylethanolamine from ethanolamine: step 1/3. Functionally, involved in phospholipid biosynthesis. Catalyzes the first step in phosphatidylethanolamine biosynthesis. This Arabidopsis thaliana (Mouse-ear cress) protein is Probable ethanolamine kinase (EMB1187).